A 466-amino-acid polypeptide reads, in one-letter code: Reticulophagy regulator 3 (466 aa).

The tract at residues 1–28 (MAEAEGVPTTPGPASGSTFRGRRDVSGS) is disordered. N-acetylalanine is present on alanine 2. At 2–80 (AEAEGVPTTP…WCLGLNAAFW (79 aa)) the chain is on the cytoplasmic side. At threonine 10 the chain carries Phosphothreonine. Residue serine 26 is modified to Phosphoserine. The chain crosses the membrane as a helical span at residues 81–101 (FFALTSLRLVFLLAFGLMIIV). Residues 102–163 (CIDQWKNKIW…FIRNVLLFKK (62 aa)) lie on the Lumenal side of the membrane. A helical membrane pass occupies residues 164–184 (QNPGKFCLLSCGILTFLAVLG). Topologically, residues 185–186 (RY) are cytoplasmic. A helical membrane pass occupies residues 187–207 (VPGLLLSYLMLVTVMMWPLAV). At 208–381 (YHRLWDRAYV…ASRDEAALPE (174 aa)) the chain is on the lumenal side. Serine 258 and serine 260 each carry phosphoserine. Threonine 283 bears the Phosphothreonine mark. Residues 284 to 374 (DSEHSDAEVS…EEPQAPPASR (91 aa)) form a disordered region. Residues serine 285, serine 288, serine 293, and serine 303 each carry the phosphoserine modification. A compositionally biased stretch (polar residues) spans 294 to 310 (CTDNGTFNLSRGQTPLT). A phosphothreonine mark is found at threonine 307 and threonine 310. Serine 313, serine 320, and serine 360 each carry phosphoserine. Basic and acidic residues predominate over residues 316-331 (LDGHSDPEESFARDLP). The helical transmembrane segment at 382–402 (LLLGALPVGSNLTSNLASLVS) threads the bilayer. Over 403–466 (QGMIQLALSG…QLDPASSRSH (64 aa)) the chain is Cytoplasmic. The tract at residues 412–466 (GASQPGPSGAPAQRATRGFLRSPSSDLDTDAEGDDFELLDQSELSQLDPASSRSH) is disordered. Acidic residues predominate over residues 438–451 (LDTDAEGDDFELLD). At threonine 440 the chain carries Phosphothreonine. An LIR motif motif is present at residues 445-450 (DDFELL). Residues 453–466 (SELSQLDPASSRSH) show a composition bias toward polar residues.

Belongs to the RETREG family. As to quaternary structure, interacts with ATG8 family modifier proteins MAP1LC3A, MAP1LC3B, MAP1LC3C, GABARAP, GABARAPL1 and GABARAPL2. Interacts with CANX. Interacts with RTN4 isoform B.

The protein localises to the endoplasmic reticulum membrane. Its function is as follows. Endoplasmic reticulum (ER)-anchored autophagy regulator which exists in an inactive state under basal conditions but is activated following cellular stress. When activated, induces ER fragmentation and mediates ER delivery into lysosomes through sequestration into autophagosomes via interaction with ATG8 family proteins. Promotes ER membrane curvature and ER tubulation required for subsequent ER fragmentation and engulfment into autophagosomes. Required for collagen quality control in a LIR motif-dependent manner. Mediates NRF1-enhanced neurite outgrowth. The chain is Reticulophagy regulator 3 from Homo sapiens (Human).